Reading from the N-terminus, the 185-residue chain is Small ribosomal subunit protein uS5c (185 aa).

An S5 DRBM domain is found at 26–89 (FVERLIKISR…ADGRKNLIKI (64 aa)).

The protein belongs to the universal ribosomal protein uS5 family. In terms of assembly, part of the 30S ribosomal subunit. Contacts protein S4.

The protein resides in the plastid. It localises to the chloroplast. In terms of biological role, with S4 and S12 plays an important role in translational accuracy. The polypeptide is Small ribosomal subunit protein uS5c (rps5) (Trieres chinensis (Marine centric diatom)).